We begin with the raw amino-acid sequence, 412 residues long: Mannose-1-phosphate guanylyltransferase regulatory subunit alpha (412 aa).

The tract at residues Thr6–Ala259 is substrate-binding domain. The GDP-alpha-D-mannose site is built by Glu88 and Gln255. Residues Leu281–Leu412 form a hexapeptide repeat domain region.

Belongs to the transferase hexapeptide repeat family. As to quaternary structure, component of the GMPPA-GMPPB mannose-1-phosphate guanylyltransferase complex composed of 4 gmppA subunits and 8 gmppB subunits; the complex is organized into three layers, a central layer made up of 2 gmppA dimers sandwiched between two layers each made up of 2 gmppB dimers.

Its function is as follows. Regulatory subunit of the GMPPA-GMPPB mannose-1-phosphate guanylyltransferase complex; reduces the catalytic activity of GMPPB when part of the complex. Mediates allosteric feedback inhibition of GMPPB catalytic activity upon binding GDP-alpha-D-mannose. Together with GMPPB regulates GDP-alpha-D-mannose levels. The polypeptide is Mannose-1-phosphate guanylyltransferase regulatory subunit alpha (gmppA) (Dictyostelium discoideum (Social amoeba)).